A 336-amino-acid chain; its full sequence is uncharacterized protein (336 aa).

The signal sequence occupies residues 1–23 (MKTRHLVYLAFALLGLGLAGLLE). The next 3 helical transmembrane spans lie at 34 to 54 (LLSLNRLYLALAGLLTGLLLG), 75 to 95 (VVVATTLGSTIGLLLAVLLTT), and 106 to 126 (VHSLLLALGLVALFVYLALGY). The region spanning 144–255 (VLDTSVLVDG…MARIYGVKAL (112 aa)) is the PINc domain. D222 lines the Mg(2+) pocket. The 62-residue stretch at 267–328 (QLQVGDTLKL…IQTQVGRLFF (62 aa)) folds into the TRAM domain.

This sequence belongs to the PINc/VapC protein family. Mg(2+) serves as cofactor.

It is found in the membrane. Functionally, part of a toxin-antitoxin (TA) system. An RNase. This is an uncharacterized protein from Thermus thermophilus (strain ATCC 27634 / DSM 579 / HB8).